A 36-amino-acid polypeptide reads, in one-letter code: Photosystem II reaction center protein M (36 aa).

The helical transmembrane segment at 5–25 threads the bilayer; sequence ILGVIATALFIIIPTSFLLIL.

The protein belongs to the PsbM family. PSII is composed of 1 copy each of membrane proteins PsbA, PsbB, PsbC, PsbD, PsbE, PsbF, PsbH, PsbI, PsbJ, PsbK, PsbL, PsbM, PsbT, PsbX, PsbY, PsbZ, Psb30/Ycf12, at least 3 peripheral proteins of the oxygen-evolving complex and a large number of cofactors. It forms dimeric complexes.

The protein resides in the plastid. The protein localises to the chloroplast thylakoid membrane. Functionally, one of the components of the core complex of photosystem II (PSII). PSII is a light-driven water:plastoquinone oxidoreductase that uses light energy to abstract electrons from H(2)O, generating O(2) and a proton gradient subsequently used for ATP formation. It consists of a core antenna complex that captures photons, and an electron transfer chain that converts photonic excitation into a charge separation. This subunit is found at the monomer-monomer interface. This Chlorella vulgaris (Green alga) protein is Photosystem II reaction center protein M.